Here is a 31-residue protein sequence, read N- to C-terminus: Cyclotide mech-4 (31 aa).

A cross-link (cyclopeptide (Gly-Asp)) is located at residues 1-31; sequence GSIPCGESCVYIPCISSLLGCSCKSKVCYKD. 3 cysteine pairs are disulfide-bonded: C5–C21, C9–C23, and C14–C28.

This is a cyclic peptide. In terms of processing, contains 3 disulfide bonds.

Its function is as follows. Probably participates in a plant defense mechanism (Potential). Binds to and induces leakage in phospholipd membranes, particularly ones containing 1-palmitoyl-2-oleophosphatidylethanolamine (POPE). This chain is Cyclotide mech-4, found in Melicytus chathamicus (Chatham Island mahoe).